Here is a 157-residue protein sequence, read N- to C-terminus: UPF0262 protein RHECIAT_CH0000657 (157 aa).

The protein belongs to the UPF0262 family.

The polypeptide is UPF0262 protein RHECIAT_CH0000657 (Rhizobium etli (strain CIAT 652)).